Reading from the N-terminus, the 204-residue chain is UPF0637 protein LMHCC_1566 (204 aa).

It belongs to the UPF0637 family.

This Listeria monocytogenes serotype 4a (strain HCC23) protein is UPF0637 protein LMHCC_1566.